The primary structure comprises 170 residues: J domain-containing protein (170 aa).

In terms of domain architecture, J spans 17 to 82 (DYYALLGCDE…SKRALYDKWR (66 aa)). Residues 101–170 (QQSMHWSKPN…VISKFRNYEI (70 aa)) are disordered. The span at 110–120 (NTKDRMLEGEP) shows a compositional bias: basic and acidic residues. Composition is skewed to low complexity over residues 121-135 (GKPSGPSSLGPSNPG) and 142-153 (GGAALWGRWGAG).

In Manduca sexta (Tobacco hawkmoth), this protein is J domain-containing protein (jdp).